A 989-amino-acid polypeptide reads, in one-letter code: Bifunctional glutamine synthetase adenylyltransferase/adenylyl-removing enzyme (989 aa).

Residues 1–474 (MNSSAIDADI…HYGKLFEGDP (474 aa)) are adenylyl removase. The tract at residues 480–989 (LPIDYAGGPD…FNRLIGGDSA (510 aa)) is adenylyl transferase.

This sequence belongs to the GlnE family. Mg(2+) serves as cofactor.

The catalysed reaction is [glutamine synthetase]-O(4)-(5'-adenylyl)-L-tyrosine + phosphate = [glutamine synthetase]-L-tyrosine + ADP. The enzyme catalyses [glutamine synthetase]-L-tyrosine + ATP = [glutamine synthetase]-O(4)-(5'-adenylyl)-L-tyrosine + diphosphate. Involved in the regulation of glutamine synthetase GlnA, a key enzyme in the process to assimilate ammonia. When cellular nitrogen levels are high, the C-terminal adenylyl transferase (AT) inactivates GlnA by covalent transfer of an adenylyl group from ATP to specific tyrosine residue of GlnA, thus reducing its activity. Conversely, when nitrogen levels are low, the N-terminal adenylyl removase (AR) activates GlnA by removing the adenylyl group by phosphorolysis, increasing its activity. The regulatory region of GlnE binds the signal transduction protein PII (GlnB) which indicates the nitrogen status of the cell. The polypeptide is Bifunctional glutamine synthetase adenylyltransferase/adenylyl-removing enzyme (Rhodopseudomonas palustris (strain BisB5)).